We begin with the raw amino-acid sequence, 199 residues long: 7-methyl-GTP pyrophosphatase (199 aa).

The Proton acceptor role is filled by D74.

The protein belongs to the Maf family. YceF subfamily. Requires a divalent metal cation as cofactor.

It is found in the cytoplasm. It carries out the reaction N(7)-methyl-GTP + H2O = N(7)-methyl-GMP + diphosphate + H(+). Nucleoside triphosphate pyrophosphatase that hydrolyzes 7-methyl-GTP (m(7)GTP). May have a dual role in cell division arrest and in preventing the incorporation of modified nucleotides into cellular nucleic acids. The chain is 7-methyl-GTP pyrophosphatase from Albidiferax ferrireducens (strain ATCC BAA-621 / DSM 15236 / T118) (Rhodoferax ferrireducens).